The following is a 376-amino-acid chain: 23S rRNA (uracil(747)-C(5))-methyltransferase RlmC (376 aa).

Positions 3, 11, 14, and 87 each coordinate [4Fe-4S] cluster. Positions 212, 241, 262, and 307 each coordinate S-adenosyl-L-methionine. C334 serves as the catalytic Nucleophile.

This sequence belongs to the class I-like SAM-binding methyltransferase superfamily. RNA M5U methyltransferase family. RlmC subfamily.

The catalysed reaction is uridine(747) in 23S rRNA + S-adenosyl-L-methionine = 5-methyluridine(747) in 23S rRNA + S-adenosyl-L-homocysteine + H(+). Its function is as follows. Catalyzes the formation of 5-methyl-uridine at position 747 (m5U747) in 23S rRNA. This is 23S rRNA (uracil(747)-C(5))-methyltransferase RlmC from Yersinia pseudotuberculosis serotype O:1b (strain IP 31758).